We begin with the raw amino-acid sequence, 404 residues long: Cysteine desulfurase IscS (404 aa).

Residues Ala-75–Thr-76, Asn-155, Gln-183, and Ser-203–His-205 contribute to the pyridoxal 5'-phosphate site. Position 206 is an N6-(pyridoxal phosphate)lysine (Lys-206). Residue Thr-243 participates in pyridoxal 5'-phosphate binding. The Cysteine persulfide intermediate role is filled by Cys-328. Cys-328 is a binding site for [2Fe-2S] cluster.

It belongs to the class-V pyridoxal-phosphate-dependent aminotransferase family. NifS/IscS subfamily. In terms of assembly, homodimer. Forms a heterotetramer with IscU, interacts with other sulfur acceptors. It depends on pyridoxal 5'-phosphate as a cofactor.

It localises to the cytoplasm. It catalyses the reaction (sulfur carrier)-H + L-cysteine = (sulfur carrier)-SH + L-alanine. It functions in the pathway cofactor biosynthesis; iron-sulfur cluster biosynthesis. Functionally, master enzyme that delivers sulfur to a number of partners involved in Fe-S cluster assembly, tRNA modification or cofactor biosynthesis. Catalyzes the removal of elemental sulfur atoms from cysteine to produce alanine. Functions as a sulfur delivery protein for Fe-S cluster synthesis onto IscU, an Fe-S scaffold assembly protein, as well as other S acceptor proteins. In Shewanella sp. (strain ANA-3), this protein is Cysteine desulfurase IscS.